The following is a 290-amino-acid chain: ATP synthase gamma chain (290 aa).

It belongs to the ATPase gamma chain family. As to quaternary structure, F-type ATPases have 2 components, CF(1) - the catalytic core - and CF(0) - the membrane proton channel. CF(1) has five subunits: alpha(3), beta(3), gamma(1), delta(1), epsilon(1). CF(0) has three main subunits: a, b and c.

Its subcellular location is the cell inner membrane. Produces ATP from ADP in the presence of a proton gradient across the membrane. The gamma chain is believed to be important in regulating ATPase activity and the flow of protons through the CF(0) complex. This chain is ATP synthase gamma chain, found in Amoebophilus asiaticus (strain 5a2).